Reading from the N-terminus, the 188-residue chain is Acireductone dioxygenase (188 aa).

Fe(2+) contacts are provided by His97, His99, Glu103, and His141. Residues His97, His99, Glu103, and His141 each contribute to the Ni(2+) site.

This sequence belongs to the acireductone dioxygenase (ARD) family. Monomer. Fe(2+) is required as a cofactor. Requires Ni(2+) as cofactor.

The enzyme catalyses 1,2-dihydroxy-5-(methylsulfanyl)pent-1-en-3-one + O2 = 3-(methylsulfanyl)propanoate + CO + formate + 2 H(+). It catalyses the reaction 1,2-dihydroxy-5-(methylsulfanyl)pent-1-en-3-one + O2 = 4-methylsulfanyl-2-oxobutanoate + formate + 2 H(+). It participates in amino-acid biosynthesis; L-methionine biosynthesis via salvage pathway; L-methionine from S-methyl-5-thio-alpha-D-ribose 1-phosphate: step 5/6. In terms of biological role, catalyzes 2 different reactions between oxygen and the acireductone 1,2-dihydroxy-3-keto-5-methylthiopentene (DHK-MTPene) depending upon the metal bound in the active site. Fe-containing acireductone dioxygenase (Fe-ARD) produces formate and 2-keto-4-methylthiobutyrate (KMTB), the alpha-ketoacid precursor of methionine in the methionine recycle pathway. Ni-containing acireductone dioxygenase (Ni-ARD) produces methylthiopropionate, carbon monoxide and formate, and does not lie on the methionine recycle pathway. In Xanthomonas euvesicatoria pv. vesicatoria (strain 85-10) (Xanthomonas campestris pv. vesicatoria), this protein is Acireductone dioxygenase.